We begin with the raw amino-acid sequence, 273 residues long: DNA repair protein RecO (273 aa).

The disordered stretch occupies residues N250 to S273. A compositionally biased stretch (basic and acidic residues) spans G257 to S273.

This sequence belongs to the RecO family.

In terms of biological role, involved in DNA repair and RecF pathway recombination. In Desulfitobacterium hafniense (strain DSM 10664 / DCB-2), this protein is DNA repair protein RecO.